A 663-amino-acid polypeptide reads, in one-letter code: DNA ligase (663 aa).

NAD(+) is bound by residues 31–35, 80–81, and Glu109; these read DYEYD and SL. Catalysis depends on Lys111, which acts as the N6-AMP-lysine intermediate. Positions 132, 167, 283, and 307 each coordinate NAD(+). Zn(2+) contacts are provided by Cys401, Cys404, Cys419, and Cys424. The 78-residue stretch at 586 to 663 folds into the BRCT domain; it reads KIDNRFLGKT…TEEDLKDMIK (78 aa).

The protein belongs to the NAD-dependent DNA ligase family. LigA subfamily. It depends on Mg(2+) as a cofactor. Mn(2+) is required as a cofactor.

It catalyses the reaction NAD(+) + (deoxyribonucleotide)n-3'-hydroxyl + 5'-phospho-(deoxyribonucleotide)m = (deoxyribonucleotide)n+m + AMP + beta-nicotinamide D-nucleotide.. In terms of biological role, DNA ligase that catalyzes the formation of phosphodiester linkages between 5'-phosphoryl and 3'-hydroxyl groups in double-stranded DNA using NAD as a coenzyme and as the energy source for the reaction. It is essential for DNA replication and repair of damaged DNA. This is DNA ligase from Clostridium kluyveri (strain NBRC 12016).